Here is a 346-residue protein sequence, read N- to C-terminus: Large ribosomal subunit protein uL1c (346 aa).

The N-terminal 70 residues, 1–70 (MAACATHSSL…RASNHKFIVS (70 aa)), are a transit peptide targeting the chloroplast. Y129 is modified (phosphotyrosine). T177 is subject to Phosphothreonine. S197 carries the phosphoserine modification.

It belongs to the universal ribosomal protein uL1 family. As to quaternary structure, part of the 50S ribosomal subunit.

It is found in the plastid. It localises to the chloroplast. Functionally, this protein binds directly to 23S ribosomal RNA. The protein is Large ribosomal subunit protein uL1c (RPL1) of Arabidopsis thaliana (Mouse-ear cress).